The following is a 325-amino-acid chain: NADH-cytochrome b5 reductase 2 (325 aa).

The chain crosses the membrane as a helical span at residues 32–48; that stretch reads VPLYGGLALAAGGAYYY. An FAD-binding FR-type domain is found at 74-179; that stretch reads QGWVDLKLAG…KGPIPKYPWE (106 aa). 182-217 contributes to the FAD binding site; that stretch reads KHDHICMIAGGTGITPMYQIIRKIFNNPNDKTKVTL.

The protein belongs to the flavoprotein pyridine nucleotide cytochrome reductase family. The cofactor is FAD.

Its subcellular location is the mitochondrion outer membrane. The enzyme catalyses 2 Fe(III)-[cytochrome b5] + NADH = 2 Fe(II)-[cytochrome b5] + NAD(+) + H(+). Its function is as follows. May mediate the reduction of outer membrane cytochrome b5. This chain is NADH-cytochrome b5 reductase 2 (MCR1), found in Coccidioides immitis (strain RS) (Valley fever fungus).